A 250-amino-acid polypeptide reads, in one-letter code: MIKIDNVKKFYTDKVKIGPLDIEIPKAGFTSLIGPNGAGKSTTLLMIGRLLDMDEGQIQVANMDVSESKSKDLAKVLTILRQENHFVTRLTVRQLVGFGRFPYSKGRLTKEDEVIISKYIDFLDLTNLENRYLDELSGGQRQRAYVAMVLCQETEYVLLDEPLNNLDVARSVQMMEHLRRAANEFGRTILTVMHDINFAAKYSDKICAMKDGQIAAFGTVEEVMDSTLLTDIFETRIEIIKGPYGPIAVY.

The region spanning 2-236 is the ABC transporter domain; the sequence is IKIDNVKKFY…TLLTDIFETR (235 aa). 34 to 41 lines the ATP pocket; it reads GPNGAGKS.

This sequence belongs to the ABC transporter superfamily. As to quaternary structure, the complex is composed of two ATP-binding proteins (FatE), two transmembrane proteins (FatC and FatD) and a solute-binding protein (FpuA).

The protein resides in the cell membrane. It catalyses the reaction a Fe(III)-siderophore(out) + ATP + H2O = a Fe(III)-siderophore(in) + ADP + phosphate + H(+). In terms of biological role, part of an ABC transporter complex involved in ferric-petrobactin uptake. Probably responsible for energy coupling to the transport system. The sequence is that of Petrobactin import ATP-binding protein FatE from Bacillus anthracis.